Reading from the N-terminus, the 178-residue chain is uncharacterized protein (178 aa).

Positions 1–16 are enriched in basic and acidic residues; the sequence is MNKRTSVDASKEDLHP. The disordered stretch occupies residues 1 to 43; sequence MNKRTSVDASKEDLHPADPQSGEGVPPNRKNTKTSPRGEGTAP.

This is an uncharacterized protein from Homo sapiens (Human).